The chain runs to 165 residues: UPF0303 protein Bcep18194_A4700 (165 aa).

The protein belongs to the UPF0303 family.

This Burkholderia lata (strain ATCC 17760 / DSM 23089 / LMG 22485 / NCIMB 9086 / R18194 / 383) protein is UPF0303 protein Bcep18194_A4700.